The primary structure comprises 218 residues: UPF0126 membrane protein SCO4104 (218 aa).

The next 7 helical transmembrane spans lie at 8-28 (LLAL…LTAV), 37-57 (GVVV…DVLI), 64-84 (AFLD…AFAV), 91-111 (LEPA…VIGA), 118-138 (GLAV…GGTI), 154-174 (LYAI…ETGV), and 179-199 (AALG…HFGI).

The protein belongs to the UPF0126 family.

It localises to the cell membrane. The protein is UPF0126 membrane protein SCO4104 of Streptomyces coelicolor (strain ATCC BAA-471 / A3(2) / M145).